Reading from the N-terminus, the 204-residue chain is Twist-related protein 1 (204 aa).

Residues 1 to 18 (MMQDVSSSPVSPADDSLS) show a composition bias toward low complexity. The segment at 1 to 107 (MMQDVSSSPV…GGGSPQSYEE (107 aa)) is disordered. Positions 34 to 43 (RGGRKRRSSR) are enriched in basic residues. 2 stretches are compositionally biased toward gly residues: residues 46–65 (AGGG…GGDE) and 80–101 (GCGG…GGGS). Residues 110-161 (TQRVMANVRERQRTQSLNEAFAALRKIIPTLPSDKLSKIQTLKLAARYIDFL) enclose the bHLH domain. The interval 163-193 (QVLQSDELDSKMASCSYVAHERFSYAFSVWR) is sufficient for transactivation activity.

In terms of assembly, efficient DNA binding requires dimerization with another bHLH protein. Homodimer or heterodimer with E proteins such as TCF3. ID1 binds preferentially to TCF3 but does not interact efficiently with TWIST1 so ID1 levels control the amount of TCF3 available to dimerize with TWIST and thus determine the type of dimer formed.

The protein resides in the nucleus. Its function is as follows. Acts as a transcriptional regulator. Inhibits myogenesis by sequestrating E proteins, inhibiting trans-activation by MEF2, and inhibiting DNA-binding by MYOD1 through physical interaction. This interaction probably involves the basic domains of both proteins. Also represses expression of pro-inflammatory cytokines such as TNFA and IL1B. Regulates cranial suture patterning and fusion. Activates transcription as a heterodimer with E proteins. Regulates gene expression differentially, depending on dimer composition. Homodimers induce expression of FGFR2 and POSTN while heterodimers repress FGFR2 and POSTN expression and induce THBS1 expression. Heterodimerization is also required for osteoblast differentiation. Represses the activity of the circadian transcriptional activator: NPAS2-BMAL1 heterodimer. The protein is Twist-related protein 1 (TWIST1) of Nomascus concolor (Black crested gibbon).